We begin with the raw amino-acid sequence, 426 residues long: Delta-aminolevulinic acid dehydratase, chloroplastic (426 aa).

The transit peptide at 1-45 directs the protein to the chloroplast; the sequence is MASTVSFSPANVQMLQGRSCHGHAAFGGCSAVPRTGPRMRSVAVR. The disordered stretch occupies residues 74-107; it reads GRFPAPPPLVRPKAPEGTPQIRPLDLTKRPRRNR. Residue Lys293 is the Schiff-base intermediate with substrate of the active site. Residues Arg303 and Lys315 each contribute to the 5-aminolevulinate site. Glu331 serves as a coordination point for Mg(2+). Lys346 serves as the catalytic Schiff-base intermediate with substrate. The 5-aminolevulinate site is built by Ser372 and Tyr411.

Belongs to the ALAD family. As to quaternary structure, homooctamer. The cofactor is Mg(2+).

Its subcellular location is the plastid. The protein localises to the chloroplast. The catalysed reaction is 2 5-aminolevulinate = porphobilinogen + 2 H2O + H(+). The protein operates within porphyrin-containing compound metabolism; protoporphyrin-IX biosynthesis; coproporphyrinogen-III from 5-aminolevulinate: step 1/4. Catalyzes an early step in the biosynthesis of tetrapyrroles. Binds two molecules of 5-aminolevulinate per subunit, each at a distinct site, and catalyzes their condensation to form porphobilinogen. The chain is Delta-aminolevulinic acid dehydratase, chloroplastic (HEMB) from Oryza sativa subsp. japonica (Rice).